A 416-amino-acid polypeptide reads, in one-letter code: MGLERVVVIGLGVSGRSIARFLAQKGVCVLGVDKSLHALQNCPYIQEKYLENEEFPSQVDYVVRSPGVSKEHPWVQAAIASHIPVMTDIQLAFQTEKFTERESLAITGTTGKTTTILFLEYLFKRSGIPAFAMGNVGIPILDGMQNPGVRIVEISSFQLADQEKSYPVLSGGMILNISDNHLDYHGNFSEYFQAKQNLALCMRNPDDLWVGDERFYGHLYLEEVQKYMRLLDKESALKPLYLHDKYNYCCAYLLAKIEFPISETSFIEAVATFNKPPHRMEYLGQKQGIHYINDSKATTVSATETALLGVGNQAIVILGGRNKGCTFSSLLPALRKAAKSVVAMGECAQEIARDLEEFPVTVVKNLSEALLCAEEQAVPGDVIVLSPACASFDQFRSYEERGAMFKHLVGMEEVLL.

Gly-108–Thr-114 is an ATP binding site.

The protein belongs to the MurCDEF family.

The protein resides in the cytoplasm. It carries out the reaction UDP-N-acetyl-alpha-D-muramoyl-L-alanine + D-glutamate + ATP = UDP-N-acetyl-alpha-D-muramoyl-L-alanyl-D-glutamate + ADP + phosphate + H(+). The protein operates within cell wall biogenesis; peptidoglycan biosynthesis. Functionally, cell wall formation. Catalyzes the addition of glutamate to the nucleotide precursor UDP-N-acetylmuramoyl-L-alanine (UMA). The chain is UDP-N-acetylmuramoylalanine--D-glutamate ligase from Chlamydia trachomatis serovar L2 (strain ATCC VR-902B / DSM 19102 / 434/Bu).